The primary structure comprises 232 residues: Cilia- and flagella-associated protein 95 (232 aa).

Over methionine 1–lysine 96 the chain is Extracellular. An N-linked (GlcNAc...) asparagine glycan is attached at asparagine 75. The helical transmembrane segment at methionine 97–leucine 115 threads the bilayer. The Cytoplasmic segment spans residues asparagine 116 to lysine 232. The interval leucine 153 to proline 163 is mn.

In terms of assembly, microtubule inner protein component of sperm flagellar doublet microtubules. Interacts with MYH9. Interacts with MYH10. As to expression, expressed in trachea multiciliated cells.

It localises to the cytoplasm. It is found in the cytoskeleton. Its subcellular location is the cilium axoneme. The protein localises to the flagellum axoneme. The protein resides in the cell membrane. In terms of biological role, microtubule inner protein (MIP) part of the dynein-decorated doublet microtubules (DMTs) in cilia axoneme, which is required for motile cilia beating. This Bos taurus (Bovine) protein is Cilia- and flagella-associated protein 95.